We begin with the raw amino-acid sequence, 402 residues long: Argininosuccinate synthase (402 aa).

ATP is bound by residues 10–18 (AYSGGLDTS) and alanine 37. Positions 88 and 93 each coordinate L-citrulline. Residue glycine 118 coordinates ATP. Residues threonine 120, asparagine 124, and aspartate 125 each coordinate L-aspartate. An L-citrulline-binding site is contributed by asparagine 124. Residues arginine 128, serine 179, serine 188, glutamate 264, and tyrosine 276 each coordinate L-citrulline.

The protein belongs to the argininosuccinate synthase family. Type 1 subfamily. As to quaternary structure, homotetramer.

Its subcellular location is the cytoplasm. The enzyme catalyses L-citrulline + L-aspartate + ATP = 2-(N(omega)-L-arginino)succinate + AMP + diphosphate + H(+). It participates in amino-acid biosynthesis; L-arginine biosynthesis; L-arginine from L-ornithine and carbamoyl phosphate: step 2/3. The sequence is that of Argininosuccinate synthase from Alkalilimnicola ehrlichii (strain ATCC BAA-1101 / DSM 17681 / MLHE-1).